The following is a 537-amino-acid chain: Frizzled-4 (537 aa).

The N-terminal stretch at 1–36 (MAWPGTGPSSRGAPGGVGLRLGLLLQFLLLLRPTLG) is a signal peptide. The Extracellular portion of the chain corresponds to 37–212 (FGDEEERRCD…KCGYDAGLYS (176 aa)). Residues 40 to 161 (EEERRCDPIR…NDHNHMCMEG (122 aa)) form the FZ domain. Intrachain disulfides connect Cys-45/Cys-106, Cys-53/Cys-99, Cys-90/Cys-128, Cys-117/Cys-158, Cys-121/Cys-145, Cys-181/Cys-200, Cys-204/Cys-282, and Cys-302/Cys-377. Asn-59 carries N-linked (GlcNAc...) asparagine glycosylation. An N-linked (GlcNAc...) asparagine glycan is attached at Asn-144. Residues 213-243 (RSAKEFTDIWMAVWASLCFISTTFTVLTFLI) form a helical membrane-spanning segment. The Cytoplasmic portion of the chain corresponds to 244–249 (DSSRFS). A helical transmembrane segment spans residues 250–275 (YPERPIIFLSMCYNIYSIAYIVRLTV). Residues 276-299 (GRERISCDFEEAAEPVLIQEGLKN) are Extracellular-facing. A helical membrane pass occupies residues 300–333 (TGCAIIFLLMYFFGMASSIWWVILTLTWFLAAGL). Over 334–336 (KWG) the chain is Cytoplasmic. Residues 337-365 (HEAIEMHSSYFHIAAWAIPAVKTIVILIM) form a helical membrane-spanning segment. Topologically, residues 366–383 (RLVDADELTGLCYVGNQN) are extracellular. Residues 384–410 (LDALTGFVVAPLFTYLVIGTLFIAAGL) form a helical membrane-spanning segment. The Cytoplasmic segment spans residues 411-431 (VALFKIRSNLQKDGTKTDKLE). The chain crosses the membrane as a helical span at residues 432-460 (RLMVKIGVFSVLYTVPATCVIACYFYEIS). The Extracellular segment spans residues 461–473 (NWALFRYSADDSN). The helical transmembrane segment at 474-495 (MAVEMLKIFMSLLVGITSGMWI) threads the bilayer. The Cytoplasmic segment spans residues 496-537 (WSAKTLHTWQKCSNRLVNSGKVKREKRGNGWVKPGKGNETVV). Positions 499–504 (KTLHTW) match the Lys-Thr-X-X-X-Trp motif, mediates interaction with the PDZ domain of Dvl family members motif. The short motif at 535-537 (TVV) is the PDZ-binding element.

This sequence belongs to the G-protein coupled receptor Fz/Smo family. In terms of assembly, interacts with MAGI3 and NDP. Component of a complex, at least composed of TSPAN12, FZD4 and norrin (NDP). Interacts (via FZ domain) with TSKU; TSKU competes with WNT2B for binding to FZD4, inhibiting Wnt signaling and repressing peripheral eye development. Interacts with glypican GPC3. In terms of processing, ubiquitinated by ZNRF3, leading to its degradation by the proteasome. As to expression, expressed in chondrocytes.

The protein localises to the cell membrane. In terms of biological role, receptor for Wnt proteins. Most frizzled receptors are coupled to the beta-catenin (CTNNB1) canonical signaling pathway, which leads to the activation of disheveled proteins, inhibition of GSK-3 kinase, nuclear accumulation of beta-catenin (CTNNB1) and activation of Wnt target genes. Plays a critical role in retinal vascularization by acting as a receptor for Wnt proteins and norrin (NDP). In retina, it can be activated by Wnt protein-binding and also by Wnt-independent signaling via binding of norrin (NDP), promoting in both cases beta-catenin (CTNNB1) accumulation and stimulation of LEF/TCF-mediated transcriptional programs. A second signaling pathway involving PKC and calcium fluxes has been seen for some family members, but it is not yet clear if it represents a distinct pathway or if it can be integrated in the canonical pathway, as PKC seems to be required for Wnt-mediated inactivation of GSK-3 kinase. Both pathways seem to involve interactions with G-proteins. May be involved in transduction and intercellular transmission of polarity information during tissue morphogenesis and/or in differentiated tissues. Activation by Wnt5A stimulates PKC activity via a G-protein-dependent mechanism. The protein is Frizzled-4 (Fzd4) of Mus musculus (Mouse).